A 128-amino-acid polypeptide reads, in one-letter code: RYamide neuropeptides (128 aa).

The signal sequence occupies residues Met1 to Ser23. Positions Tyr26–Glu29 are excised as a propeptide. The residue at position 44 (Tyr44) is a Tyrosine amide. Residues Gly47–Arg63 constitute a propeptide that is removed on maturation. Tyr73 carries the tyrosine amide modification. The propeptide occupies Ser77–Asn128.

It localises to the secreted. Its function is as follows. Neuropeptides RYamide-1 and RYamide-2 are ligands for the G-protein coupled receptor RYa-R. RYamide-2 is the most potent activator of RYa-R. The polypeptide is RYamide neuropeptides (Tribolium castaneum (Red flour beetle)).